The sequence spans 101 residues: Putative pterin-4-alpha-carbinolamine dehydratase (101 aa).

Belongs to the pterin-4-alpha-carbinolamine dehydratase family.

The catalysed reaction is (4aS,6R)-4a-hydroxy-L-erythro-5,6,7,8-tetrahydrobiopterin = (6R)-L-erythro-6,7-dihydrobiopterin + H2O. This chain is Putative pterin-4-alpha-carbinolamine dehydratase, found in Rhizobium johnstonii (strain DSM 114642 / LMG 32736 / 3841) (Rhizobium leguminosarum bv. viciae).